Consider the following 155-residue polypeptide: UPF0735 ACT domain-containing protein CA_C1234 (155 aa).

Residues 79–154 form the ACT domain; it reads TISILIEHRR…NVLKVEIVAM (76 aa).

Belongs to the UPF0735 family.

The polypeptide is UPF0735 ACT domain-containing protein CA_C1234 (Clostridium acetobutylicum (strain ATCC 824 / DSM 792 / JCM 1419 / IAM 19013 / LMG 5710 / NBRC 13948 / NRRL B-527 / VKM B-1787 / 2291 / W)).